We begin with the raw amino-acid sequence, 177 residues long: Inorganic pyrophosphatase (177 aa).

The substrate site is built by lysine 31, arginine 45, and tyrosine 57. Mg(2+) is bound by residues aspartate 67, aspartate 72, and aspartate 104. Tyrosine 142 provides a ligand contact to substrate.

The protein belongs to the PPase family. In terms of assembly, homohexamer. It depends on Mg(2+) as a cofactor.

The protein resides in the cytoplasm. It catalyses the reaction diphosphate + H2O = 2 phosphate + H(+). Catalyzes the hydrolysis of inorganic pyrophosphate (PPi) forming two phosphate ions. In Neisseria meningitidis serogroup A / serotype 4A (strain DSM 15465 / Z2491), this protein is Inorganic pyrophosphatase.